Reading from the N-terminus, the 430-residue chain is Adenylosuccinate synthetase (430 aa).

GTP-binding positions include 12 to 18 (GDEGKGK) and 40 to 42 (GHT). Residue D13 is the Proton acceptor of the active site. Residues D13 and G40 each coordinate Mg(2+). IMP is bound by residues 13 to 16 (DEGK), 38 to 41 (NAGH), T128, R142, Q223, T238, and R302. Catalysis depends on H41, which acts as the Proton donor. 298-304 (VNTGRTR) contacts substrate. GTP contacts are provided by residues R304, 330 to 332 (KLD), and 412 to 414 (GVG).

Belongs to the adenylosuccinate synthetase family. In terms of assembly, homodimer. Requires Mg(2+) as cofactor.

The protein localises to the cytoplasm. It catalyses the reaction IMP + L-aspartate + GTP = N(6)-(1,2-dicarboxyethyl)-AMP + GDP + phosphate + 2 H(+). Its pathway is purine metabolism; AMP biosynthesis via de novo pathway; AMP from IMP: step 1/2. Its function is as follows. Plays an important role in the de novo pathway of purine nucleotide biosynthesis. Catalyzes the first committed step in the biosynthesis of AMP from IMP. The chain is Adenylosuccinate synthetase from Corynebacterium ammoniagenes (Brevibacterium ammoniagenes).